The sequence spans 212 residues: Holliday junction branch migration complex subunit RuvA (212 aa).

The tract at residues 1–70 (MISYLKGSPI…EDQQILYGFS (70 aa)) is domain I. The interval 71 to 149 (TTAERELFRQ…QWRKMVGVTV (79 aa)) is domain II. Residues 150–160 (TSSAAMPSLEI) form a flexible linker region. Residues 160-212 (ILEDIEMTLLALGYTNEEINKAISTLSQDNLMLKNTNTEEWIKEAIAWLSQGT) are domain III.

The protein belongs to the RuvA family. In terms of assembly, homotetramer. Forms an RuvA(8)-RuvB(12)-Holliday junction (HJ) complex. HJ DNA is sandwiched between 2 RuvA tetramers; dsDNA enters through RuvA and exits via RuvB. An RuvB hexamer assembles on each DNA strand where it exits the tetramer. Each RuvB hexamer is contacted by two RuvA subunits (via domain III) on 2 adjacent RuvB subunits; this complex drives branch migration. In the full resolvosome a probable DNA-RuvA(4)-RuvB(12)-RuvC(2) complex forms which resolves the HJ.

The protein resides in the cytoplasm. In terms of biological role, the RuvA-RuvB-RuvC complex processes Holliday junction (HJ) DNA during genetic recombination and DNA repair, while the RuvA-RuvB complex plays an important role in the rescue of blocked DNA replication forks via replication fork reversal (RFR). RuvA specifically binds to HJ cruciform DNA, conferring on it an open structure. The RuvB hexamer acts as an ATP-dependent pump, pulling dsDNA into and through the RuvAB complex. HJ branch migration allows RuvC to scan DNA until it finds its consensus sequence, where it cleaves and resolves the cruciform DNA. This chain is Holliday junction branch migration complex subunit RuvA, found in Crocosphaera subtropica (strain ATCC 51142 / BH68) (Cyanothece sp. (strain ATCC 51142)).